Here is a 197-residue protein sequence, read N- to C-terminus: dITP/XTP pyrophosphatase (197 aa).

Substrate is bound at residue 8 to 13; that stretch reads TGNPGK. 2 residues coordinate Mg(2+): E40 and D69. The active-site Proton acceptor is D69. Substrate is bound by residues S70, 154-157, K177, and 182-183; these read FGYD and HR.

The protein belongs to the HAM1 NTPase family. Homodimer. Requires Mg(2+) as cofactor.

The enzyme catalyses XTP + H2O = XMP + diphosphate + H(+). The catalysed reaction is dITP + H2O = dIMP + diphosphate + H(+). It carries out the reaction ITP + H2O = IMP + diphosphate + H(+). In terms of biological role, pyrophosphatase that catalyzes the hydrolysis of nucleoside triphosphates to their monophosphate derivatives, with a high preference for the non-canonical purine nucleotides XTP (xanthosine triphosphate), dITP (deoxyinosine triphosphate) and ITP. Seems to function as a house-cleaning enzyme that removes non-canonical purine nucleotides from the nucleotide pool, thus preventing their incorporation into DNA/RNA and avoiding chromosomal lesions. This Pectobacterium atrosepticum (strain SCRI 1043 / ATCC BAA-672) (Erwinia carotovora subsp. atroseptica) protein is dITP/XTP pyrophosphatase.